The sequence spans 411 residues: ATPase family AAA domain-containing protein 3C (411 aa).

177 to 184 (GPPGTGKT) contacts ATP.

The protein belongs to the AAA ATPase family.

In Homo sapiens (Human), this protein is ATPase family AAA domain-containing protein 3C (ATAD3C).